Reading from the N-terminus, the 61-residue chain is Conotoxin Am14.1 (61 aa).

2 consecutive propeptides follow at residues 1–19 and 52–61; these read MLSV…HLPR and KRDLDLFTDQ.

Mostly non-hydroxylated. Post-translationally, contains 2 disulfide bonds. Expressed by the venom duct.

Its subcellular location is the secreted. In terms of biological role, probable toxin that inhibits ion channels. The sequence is that of Conotoxin Am14.1 from Conus amadis (Amadis cone).